The primary structure comprises 404 residues: Argininosuccinate synthase (404 aa).

Residues 12 to 20 (AYSGGLDTS) and alanine 39 each bind ATP. L-citrulline is bound by residues tyrosine 90 and serine 95. Glycine 120 lines the ATP pocket. Residues threonine 122, asparagine 126, and aspartate 127 each contribute to the L-aspartate site. Asparagine 126 provides a ligand contact to L-citrulline. L-citrulline-binding residues include arginine 130, serine 181, serine 190, glutamate 266, and tyrosine 278.

It belongs to the argininosuccinate synthase family. Type 1 subfamily. As to quaternary structure, homotetramer.

It localises to the cytoplasm. It carries out the reaction L-citrulline + L-aspartate + ATP = 2-(N(omega)-L-arginino)succinate + AMP + diphosphate + H(+). The protein operates within amino-acid biosynthesis; L-arginine biosynthesis; L-arginine from L-ornithine and carbamoyl phosphate: step 2/3. The polypeptide is Argininosuccinate synthase (Rhodospirillum rubrum (strain ATCC 11170 / ATH 1.1.1 / DSM 467 / LMG 4362 / NCIMB 8255 / S1)).